Reading from the N-terminus, the 379-residue chain is Protein RecA (379 aa).

79 to 86 (GPESSGKT) contributes to the ATP binding site.

Belongs to the RecA family.

It is found in the cytoplasm. Can catalyze the hydrolysis of ATP in the presence of single-stranded DNA, the ATP-dependent uptake of single-stranded DNA by duplex DNA, and the ATP-dependent hybridization of homologous single-stranded DNAs. It interacts with LexA causing its activation and leading to its autocatalytic cleavage. This is Protein RecA from Streptococcus agalactiae.